A 127-amino-acid polypeptide reads, in one-letter code: MDVFKKGFSIAKEGVVGAVEKTKQGVTEAAEKTKEGVMYVGTKTKENVVHSVTSVAEKTKEQANAVSEAVVSSVNTVAAKTVEEAENIAVTSGVVRKEDLKPSAPQQEGEAAKEKEEVAEEAQSGGD.

A run of 2 repeats spans residues 20–30 and 31–41. Residues 20 to 67 form a 4 X 11 AA tandem repeats of [EGSA]-K-T-K-[EQ]-[GQ]-V-X(4) region; it reads EKTKQGVTEAAEKTKEGVMYVGTKTKENVVHSVTSVAEKTKEQANAVS. A 3; approximate repeat occupies 42–56; the sequence is TKTKENVVHSVTSVA. The stretch at 57–67 is repeat 4; the sequence is EKTKEQANAVS. Residues serine 67 and serine 72 each carry the phosphoserine modification. The tract at residues 97 to 127 is disordered; it reads KEDLKPSAPQQEGEAAKEKEEVAEEAQSGGD. Phosphoserine; by BARK1, CaMK2 and CK2 is present on serine 124.

This sequence belongs to the synuclein family. In terms of assembly, may be a centrosome-associated protein. Interacts with MYOC; affects its secretion and its aggregation. Post-translationally, phosphorylated. Phosphorylation by GRK5 appears to occur on residues distinct from the residue phosphorylated by other kinases.

It localises to the cytoplasm. Its subcellular location is the perinuclear region. It is found in the cytoskeleton. The protein localises to the microtubule organizing center. The protein resides in the centrosome. It localises to the spindle. Its function is as follows. Plays a role in neurofilament network integrity. May be involved in modulating axonal architecture during development and in the adult. In vitro, increases the susceptibility of neurofilament-H to calcium-dependent proteases. May also function in modulating the keratin network in skin. Activates the MAPK and Elk-1 signal transduction pathway. The protein is Gamma-synuclein (SNCG) of Macaca fascicularis (Crab-eating macaque).